The primary structure comprises 357 residues: UDP-3-O-acylglucosamine N-acyltransferase (357 aa).

Histidine 258 acts as the Proton acceptor in catalysis.

Belongs to the transferase hexapeptide repeat family. LpxD subfamily. Homotrimer.

The catalysed reaction is a UDP-3-O-[(3R)-3-hydroxyacyl]-alpha-D-glucosamine + a (3R)-hydroxyacyl-[ACP] = a UDP-2-N,3-O-bis[(3R)-3-hydroxyacyl]-alpha-D-glucosamine + holo-[ACP] + H(+). Its pathway is bacterial outer membrane biogenesis; LPS lipid A biosynthesis. Catalyzes the N-acylation of UDP-3-O-acylglucosamine using 3-hydroxyacyl-ACP as the acyl donor. Is involved in the biosynthesis of lipid A, a phosphorylated glycolipid that anchors the lipopolysaccharide to the outer membrane of the cell. The sequence is that of UDP-3-O-acylglucosamine N-acyltransferase from Azorhizobium caulinodans (strain ATCC 43989 / DSM 5975 / JCM 20966 / LMG 6465 / NBRC 14845 / NCIMB 13405 / ORS 571).